The chain runs to 159 residues: Serine-protein kinase RsbW (159 aa).

It belongs to the anti-sigma-factor family.

It carries out the reaction L-seryl-[protein] + ATP = O-phospho-L-seryl-[protein] + ADP + H(+). The enzyme catalyses L-threonyl-[protein] + ATP = O-phospho-L-threonyl-[protein] + ADP + H(+). Functionally, negative regulator of sigma-B activity. Phosphorylates and inactivates its specific antagonist protein, RsbV. Upon phosphorylation of RsbV, RsbW is released and binds to sigma-B, thereby blocking its ability to form an RNA polymerase holoenzyme (E-sigma-B). The sequence is that of Serine-protein kinase RsbW from Staphylococcus aureus (strain MSSA476).